We begin with the raw amino-acid sequence, 312 residues long: Putative HTH-type transcriptional regulatory protein Ta1363 (312 aa).

Residues 133-186 (LREMRMKMSLSIGYLSHYLGVSRRSVSLYENGSSATIDVFLKLQEIIKSDLVDH) enclose the HTH cro/C1-type domain. The H-T-H motif DNA-binding region spans 144-163 (IGYLSHYLGVSRRSVSLYEN).

The protein is Putative HTH-type transcriptional regulatory protein Ta1363 of Thermoplasma acidophilum (strain ATCC 25905 / DSM 1728 / JCM 9062 / NBRC 15155 / AMRC-C165).